The primary structure comprises 370 residues: Glutamate 5-kinase (370 aa).

Lys11 is a binding site for ATP. Substrate contacts are provided by Ser52, Asp139, and Asn151. Residues Thr171 to Asp172 and Thr213 to Lys219 each bind ATP. The 79-residue stretch at Thr278–Glu356 folds into the PUA domain.

This sequence belongs to the glutamate 5-kinase family.

The protein localises to the cytoplasm. It carries out the reaction L-glutamate + ATP = L-glutamyl 5-phosphate + ADP. It functions in the pathway amino-acid biosynthesis; L-proline biosynthesis; L-glutamate 5-semialdehyde from L-glutamate: step 1/2. Its function is as follows. Catalyzes the transfer of a phosphate group to glutamate to form L-glutamate 5-phosphate. This Synechococcus sp. (strain ATCC 27144 / PCC 6301 / SAUG 1402/1) (Anacystis nidulans) protein is Glutamate 5-kinase.